We begin with the raw amino-acid sequence, 618 residues long: Glucose starvation modulator protein 1 (618 aa).

The zn(2)-C6 fungal-type DNA-binding region spans 20 to 48; the sequence is CEFCHTKHIQCDVGRPCQNCLKRNIGKFC. Residues 325–352 are disordered; that stretch reads ANANTHPSHNAKLESECDSSSHSDADLE. Positions 335–352 are enriched in basic and acidic residues; the sequence is AKLESECDSSSHSDADLE. A PAS domain is found at 466–538; the sequence is LLDLENMAKL…QIFNELLAFG (73 aa).

Belongs to the ERT1/acuK family.

The protein localises to the nucleus. Its function is as follows. Transcription factor which regulates nonfermentable carbon utilization. Binds specifically to 5'-CGGN(8)CGG-3' and 5'-CGGN(9)CGG-3' sequences in the promoter region. The protein is Glucose starvation modulator protein 1 (GSM1) of Saccharomyces cerevisiae (strain YJM789) (Baker's yeast).